Consider the following 257-residue polypeptide: Acetyl-coenzyme A carboxylase carboxyl transferase subunit beta (257 aa).

A CoA carboxyltransferase N-terminal domain is found at 5–257 (VFTKCERCKQ…DLERLLGFVG (253 aa)). The Zn(2+) site is built by C9, C12, C28, and C31. The C4-type zinc-finger motif lies at 9-31 (CERCKQPVYEKDLRARFNVCPNC).

This sequence belongs to the AccD/PCCB family. Acetyl-CoA carboxylase is a heterohexamer composed of biotin carboxyl carrier protein (AccB), biotin carboxylase (AccC) and two subunits each of ACCase subunit alpha (AccA) and ACCase subunit beta (AccD). It depends on Zn(2+) as a cofactor.

The protein resides in the cytoplasm. It carries out the reaction N(6)-carboxybiotinyl-L-lysyl-[protein] + acetyl-CoA = N(6)-biotinyl-L-lysyl-[protein] + malonyl-CoA. It functions in the pathway lipid metabolism; malonyl-CoA biosynthesis; malonyl-CoA from acetyl-CoA: step 1/1. In terms of biological role, component of the acetyl coenzyme A carboxylase (ACC) complex. Biotin carboxylase (BC) catalyzes the carboxylation of biotin on its carrier protein (BCCP) and then the CO(2) group is transferred by the transcarboxylase to acetyl-CoA to form malonyl-CoA. The polypeptide is Acetyl-coenzyme A carboxylase carboxyl transferase subunit beta (Rubrobacter xylanophilus (strain DSM 9941 / JCM 11954 / NBRC 16129 / PRD-1)).